Reading from the N-terminus, the 88-residue chain is MAHKKGASSSSNGRDSEAKRLGVKRFGGQQVNAGEILVRQRGTKFHPGENVGRGGDDTLFALKAGAVEFITKRNRRLVNIVENETVDA.

Residues 1 to 25 (MAHKKGASSSSNGRDSEAKRLGVKR) form a disordered region.

It belongs to the bacterial ribosomal protein bL27 family.

This chain is Large ribosomal subunit protein bL27, found in Corynebacterium diphtheriae (strain ATCC 700971 / NCTC 13129 / Biotype gravis).